The sequence spans 382 residues: MKKAVHFGAGNIGRGFIGQILFENGFAIDFVDVNDKIINALNERHSYDIEIAEDGKRHITVSNVAGINNKENPQAVIDAVAETELITTAIGPNILPFIAQLIAKGIEKRRESQNQTPLDIIACENMIGGSAFLWQEVQKYLSADGLAFAKDYIGFPNAAVDRIVPAQVHEDPLFVVVEPFSEWVVETAAMKNPDLKLSSVHYEENLEPFIERKLFSVNSGHATTAYTGAYFGAKTVLEALKDQQVKEQVKAVLGEIRQLLMAKWQFKENDLKVYHDIIISRFENPYIVDDVTRVARTPIRKLGYDERFIRPIRELKDRGLSYEYLLQTVAYVFHYKDSNDEQSVQLKLLLQEKSLKAVVKEVTGLTDAALIEEIVTSVESLD.

4-15 (AVHFGAGNIGRG) contributes to the NAD(+) binding site.

The protein belongs to the mannitol dehydrogenase family. Monomer.

The catalysed reaction is D-mannitol 1-phosphate + NAD(+) = beta-D-fructose 6-phosphate + NADH + H(+). This Streptococcus mutans serotype c (strain ATCC 700610 / UA159) protein is Mannitol-1-phosphate 5-dehydrogenase (mtlD).